The primary structure comprises 687 residues: MAKKAKNSEKNGPRHSGNFSQESGISGNLWLATVVLIGLFVGFLNYQHIYTLFENDKHFSHLADFEREMAYRTEMGLYYSYYKTIITAPSFLEGVQLITRDTVTEHGHQINTLNRFNLYPEVILAFLYRPFRALAKSANWQVETCWQVNRGDLRPVESCEGIGNPHYFYITGVFVVAGTVATSLFYLGVLVSDSIFGGILSVLCFAFNHGEATRVQWTPPLRESFAFPFIIGHIAILTYIIKYRKSSTAHLLLLISAAVPALLFWQFTQFAFFTQICSIFAAFSMDLVPLDTAKTIIKSHLSAFFISFVMLFGNEMMIAALYFPSIWALATVIYISPMLAGIRLRPLYLLILALIFGSITLGLKVGFSKGLGIEDDAHIFDILRSKFTSFANFHTRLYTCSAEFDFIQYATIEKLSSTLLIPLALLSIGAFSWDFLSKTSLLWRTLENEDSEYGEVIYNLVQLICSTTMAVLIMRLKLFMTPHLCITVALLANSKLLGGDKIAKTVRSSVLVGLVAMLAFRGIPNIRHQLNIKGEYSNPDQEMLFDWIQSNTKQDAVFAGTMPVMANVKLTTLRPIVNHPHYEHVGIRDRTLKVYSMFSKKPVAEVHQTMKKMGVNYFIFQLMNCSNDERRPECVYRGMWDEEDPKNSARTSLCDLWILAANSKDNSRISPFKIVYNPNRNYIVLKI.

Helical transmembrane passes span 24 to 44 (GISGNLWLATVVLIGLFVGFL), 170 to 190 (ITGVFVVAGTVATSLFYLGVL), 191 to 211 (VSDSIFGGILSVLCFAFNHGE), 223 to 243 (ESFAFPFIIGHIAILTYIIKY), 253 to 273 (LLISAAVPALLFWQFTQFAFF), 276 to 296 (ICSIFAAFSMDLVPLDTAKTI), 303 to 323 (AFFISFVMLFGNEMMIAALYF), 324 to 344 (PSIWALATVIYISPMLAGIRL), 347 to 367 (LYLLILALIFGSITLGLKVGF), 415 to 435 (LSSTLLIPLALLSIGAFSWDF), and 454 to 474 (GEVIYNLVQLICSTTMAVLIM).

Belongs to the dpy-19 family.

It localises to the endoplasmic reticulum membrane. Functionally, C-mannosyltransferase that mediates C-mannosylation of tryptophan residues on target proteins such as unc-5 and mig-21. Mediates the attachment of alpha-mannose in C-C linkage to the C2 of the indole ring of tryptophan. C-mannosylation takes place in the endoplasmic reticulum and frequently found in thrombospondin (TSP) type-1 repeats and in the WSXWS motif of type I cytokine receptors. Required to orient neuroblasts QL and QR correctly on the anterior/posterior (A/P) axis: QL and QR are born in the same A/P position, but polarize and migrate left/right asymmetrically, QL migrates toward the posterior and QR migrates toward the anterior. Required with unc-40 to express mab-5 correctly in the Q cell descendants. This chain is C-mannosyltransferase dpy-19, found in Caenorhabditis briggsae.